Reading from the N-terminus, the 187-residue chain is Elongation factor P (187 aa).

It belongs to the elongation factor P family.

The protein localises to the cytoplasm. It functions in the pathway protein biosynthesis; polypeptide chain elongation. Its function is as follows. Involved in peptide bond synthesis. Stimulates efficient translation and peptide-bond synthesis on native or reconstituted 70S ribosomes in vitro. Probably functions indirectly by altering the affinity of the ribosome for aminoacyl-tRNA, thus increasing their reactivity as acceptors for peptidyl transferase. The sequence is that of Elongation factor P from Syntrophus aciditrophicus (strain SB).